The primary structure comprises 106 residues: UPF0145 protein Tlet_1264 (106 aa).

The protein belongs to the UPF0145 family.

The sequence is that of UPF0145 protein Tlet_1264 from Pseudothermotoga lettingae (strain ATCC BAA-301 / DSM 14385 / NBRC 107922 / TMO) (Thermotoga lettingae).